Here is a 231-residue protein sequence, read N- to C-terminus: 5'-methylthioadenosine/S-adenosylhomocysteine nucleosidase (231 aa).

Residue Glu-12 is the Proton acceptor of the active site. Substrate contacts are provided by residues Gly-78, Ile-153, and 174–175; that span reads ME. The active-site Proton donor is the Asp-198.

It belongs to the PNP/UDP phosphorylase family. MtnN subfamily.

The enzyme catalyses S-adenosyl-L-homocysteine + H2O = S-(5-deoxy-D-ribos-5-yl)-L-homocysteine + adenine. It carries out the reaction S-methyl-5'-thioadenosine + H2O = 5-(methylsulfanyl)-D-ribose + adenine. The catalysed reaction is 5'-deoxyadenosine + H2O = 5-deoxy-D-ribose + adenine. The protein operates within amino-acid biosynthesis; L-methionine biosynthesis via salvage pathway; S-methyl-5-thio-alpha-D-ribose 1-phosphate from S-methyl-5'-thioadenosine (hydrolase route): step 1/2. Its function is as follows. Catalyzes the irreversible cleavage of the glycosidic bond in both 5'-methylthioadenosine (MTA) and S-adenosylhomocysteine (SAH/AdoHcy) to adenine and the corresponding thioribose, 5'-methylthioribose and S-ribosylhomocysteine, respectively. Also cleaves 5'-deoxyadenosine, a toxic by-product of radical S-adenosylmethionine (SAM) enzymes, into 5-deoxyribose and adenine. This is 5'-methylthioadenosine/S-adenosylhomocysteine nucleosidase from Shewanella putrefaciens (strain CN-32 / ATCC BAA-453).